The primary structure comprises 438 residues: L-fucose-proton symporter (438 aa).

At 2 to 26 the chain is on the cytoplasmic side; the sequence is GNTSIQTQSYRAVDKDAGQSRSYII. A helical membrane pass occupies residues 27–53; sequence PFALLCSLFFLWAVANNLNDILLPQFQ. Residues 54 to 61 are Periplasmic-facing; it reads QAFTLTNF. The chain crosses the membrane as a helical span at residues 62-87; it reads QAGLIQSAFYFGYFIIPIPAGILMKK. At 88–90 the chain is on the cytoplasmic side; sequence LSY. The helical transmembrane segment at 91–113 threads the bilayer; the sequence is KAGIITGLFLYALGAALFWPAAE. At 114-117 the chain is on the periplasmic side; the sequence is IMNY. The chain crosses the membrane as a helical span at residues 118 to 144; that stretch reads TLFLVGLFIIAAGLGCLETAANPFVTV. Over 145 to 150 the chain is Cytoplasmic; it reads LGPESS. The helical transmembrane segment at 151 to 178 threads the bilayer; the sequence is GHFRLNLAQTFNSFGAIIAVVFGQSLIL. Over 179–193 the chain is Periplasmic; that stretch reads SNVPHQSQDVLDKMS. A helical transmembrane segment spans residues 194 to 227; the sequence is PEQLSAYKHSLVLSVQTPYMIIVAIVLLVALLIM. The Cytoplasmic segment spans residues 228 to 257; it reads LTKFPALQSDNHSDAKQGSFSASLSRLARI. A helical transmembrane segment spans residues 258 to 287; sequence RHWRWAVLAQFCYVGAQTACWSYLIRYAVE. Topologically, residues 288–293 are periplasmic; the sequence is EIPGMT. A helical membrane pass occupies residues 294-319; it reads AGFAANYLTGTMVCFFIGRFTGTWLI. Residues 320-324 are Cytoplasmic-facing; that stretch reads SRFAP. Residues 325–343 traverse the membrane as a helical segment; sequence HKVLAAYALIAMALCLISA. At 344 to 347 the chain is on the periplasmic side; that stretch reads FAGG. A helical transmembrane segment spans residues 348–372; the sequence is HVGLIALTLCSAFMSIQYPTIFSLG. Residues 373–379 lie on the Cytoplasmic side of the membrane; that stretch reads IKNLGQD. Residues 380–407 form a helical membrane-spanning segment; it reads TKYGSSFIVMTIIGGGIVTPVMGFVSDA. At 408 to 410 the chain is on the periplasmic side; that stretch reads AGN. Residues 411 to 430 traverse the membrane as a helical segment; that stretch reads IPTAELIPALCFAVIFIFAR. Over 431–438 the chain is Cytoplasmic; it reads FRSQTATN.

The protein belongs to the major facilitator superfamily. FHS transporter (TC 2.A.1.7) family.

The protein localises to the cell inner membrane. The catalysed reaction is L-fucose(in) + H(+)(in) = L-fucose(out) + H(+)(out). It carries out the reaction D-arabinose(out) + H(+)(out) = D-arabinose(in) + H(+)(in). The enzyme catalyses L-galactose(out) + H(+)(out) = L-galactose(in) + H(+)(in). Its function is as follows. Mediates the uptake of L-fucose across the boundary membrane with the concomitant transport of protons into the cell (symport system). Can also transport L-galactose and D-arabinose, but at reduced rates compared with L-fucose. Is not able to transport L-rhamnose and L-arabinose. Binds D-arabinose with the highest affinity, followed by L-fucose, and then by L-galactose. The protein is L-fucose-proton symporter (fucP) of Escherichia coli (strain K12).